Consider the following 365-residue polypeptide: 2-aminoethylphosphonate--pyruvate transaminase (365 aa).

Lys194 carries the post-translational modification N6-(pyridoxal phosphate)lysine.

The protein belongs to the class-V pyridoxal-phosphate-dependent aminotransferase family. PhnW subfamily. As to quaternary structure, homodimer. Pyridoxal 5'-phosphate serves as cofactor.

The enzyme catalyses (2-aminoethyl)phosphonate + pyruvate = phosphonoacetaldehyde + L-alanine. Its function is as follows. Involved in phosphonate degradation. The polypeptide is 2-aminoethylphosphonate--pyruvate transaminase (Bacillus mycoides (strain KBAB4) (Bacillus weihenstephanensis)).